A 178-amino-acid polypeptide reads, in one-letter code: MSGGKYVDSEGHLYTVPIREQGNIYKPNNKAMAEEINEKQVYDAHTKEIDLVNRDPKHLNDDVVKIDFEDVIAEPEGTHSFDGIWKASFTTFTVTKYWFYRLLSALFGIPMALIWGIYFAILSFLHIWAVVPCIKSFLIEIQCVSRVYSIYVHTFCDPFFEAVGKIFSSIRINMQKEI.

At Ser-2 the chain carries N-acetylserine. Position 2 is a phosphoserine (Ser-2). Residues 2 to 94 (SGGKYVDSEG…WKASFTTFTV (93 aa)) form a required for homooligomerization region. Residues 2 to 104 (SGGKYVDSEG…TKYWFYRLLS (103 aa)) lie on the Cytoplasmic side of the membrane. Lys-5 is subject to N6-acetyllysine; alternate. Residue Lys-5 forms a Glycyl lysine isopeptide (Lys-Gly) (interchain with G-Cter in ubiquitin); alternate linkage. Tyr-6 is modified (phosphotyrosine). Position 9 is a phosphoserine (Ser-9). Tyr-14 carries the phosphotyrosine; by ABL1 modification. Tyr-25 bears the Phosphotyrosine mark. Residues Lys-26, Lys-30, Lys-39, Lys-47, and Lys-57 each participate in a glycyl lysine isopeptide (Lys-Gly) (interchain with G-Cter in ubiquitin) cross-link. The segment at 82-94 (DGIWKASFTTFTV) is interaction with CAVIN3. Residues 105–125 (ALFGIPMALIWGIYFAILSFL) constitute an intramembrane region (helical). Residues 126–178 (HIWAVVPCIKSFLIEIQCVSRVYSIYVHTFCDPFFEAVGKIFSSIRINMQKEI) lie on the Cytoplasmic side of the membrane. The tract at residues 131–142 (VPCIKSFLIEIQ) is interacts with SPRY1, SPRY2, SPRY3 and SPRY4. Residues Cys-133, Cys-143, and Cys-156 are each lipidated (S-palmitoyl cysteine). Positions 149–160 (SIYVHTFCDPFF) are interacts with SPRY1, SPRY2, and SPRY4. Residues 167–178 (FSSIRINMQKEI) are interacts with SPRY1, SPRY2, SPRY3 and SPRY4.

Belongs to the caveolin family. In terms of assembly, homooligomer. Interacts with GLIPR2. Interacts with NOSTRIN. Interacts with SNAP25 and STX1A. Interacts (via the N-terminus) with DPP4; the interaction is direct. Interacts with CTNNB1, CDH1 and JUP. Interacts with PACSIN2; this interaction induces membrane tubulation. Interacts with SLC7A9. Interacts with BMX and BTK. Interacts with TGFBR1. Interacts with CAVIN3 (via leucine-zipper domain) in a cholesterol-sensitive manner. Interacts with CAVIN1. Interacts with EHD2 in a cholesterol-dependent manner. Forms a ternary complex with UBXN6 and VCP; mediates CAV1 targeting to lysosomes for degradation. Interacts with ABCG1; this interaction regulates ABCG1-mediated cholesterol efflux. Interacts with NEU3; this interaction enhances NEU3 sialidase activity within caveola. Interacts (via C-terminus) with SPRY1, SPRY2 (via C-terminus), SPRY3, and SPRY4. Interacts with IGFBP5; this interaction allows trafficking of IGFBP5 from the plasma membrane to the nucleus. Phosphorylated at Tyr-14 by ABL1 in response to oxidative stress. Post-translationally, ubiquitinated. Undergo monoubiquitination and multi- and/or polyubiquitination. Monoubiquitination of N-terminal lysines promotes integration in a ternary complex with UBXN6 and VCP which promotes oligomeric CAV1 targeting to lysosomes for degradation. Ubiquitinated by ZNRF1; leading to degradation and modulation of the TLR4-mediated immune response.

The protein localises to the golgi apparatus membrane. It localises to the cell membrane. Its subcellular location is the membrane. It is found in the caveola. The protein resides in the membrane raft. In terms of biological role, may act as a scaffolding protein within caveolar membranes. Forms a stable heterooligomeric complex with CAV2 that targets to lipid rafts and drives caveolae formation. Mediates the recruitment of CAVIN proteins (CAVIN1/2/3/4) to the caveolae. Interacts directly with G-protein alpha subunits and can functionally regulate their activity. Involved in the costimulatory signal essential for T-cell receptor (TCR)-mediated T-cell activation. Its binding to DPP4 induces T-cell proliferation and NF-kappa-B activation in a T-cell receptor/CD3-dependent manner. Recruits CTNNB1 to caveolar membranes and may regulate CTNNB1-mediated signaling through the Wnt pathway. Negatively regulates TGFB1-mediated activation of SMAD2/3 by mediating the internalization of TGFBR1 from membrane rafts leading to its subsequent degradation. Binds 20(S)-hydroxycholesterol (20(S)-OHC). The protein is Caveolin-1 (CAV1) of Mustela putorius furo (European domestic ferret).